The primary structure comprises 105 residues: SAGA-associated factor 11 (105 aa).

The segment at 76 to 97 (FRCPNCSRDLSANRFAAHLERC) adopts an SGF11-type zinc-finger fold.

This sequence belongs to the SGF11 family. In terms of assembly, component of the 1.8 MDa SAGA transcription coactivator-HAT complex. SAGA is built of 5 distinct domains with specialized functions. Within the SAGA complex, SUS1, SGF11, SGF73 and UBP8 form an additional subcomplex of SAGA called the DUB module (deubiquitination module). Interacts directly with SGF73, SUS1 and UBP8.

It is found in the nucleus. In terms of biological role, functions as a component of the transcription regulatory histone acetylation (HAT) complex SAGA. At the promoters, SAGA is required for recruitment of the basal transcription machinery. It influences RNA polymerase II transcriptional activity through different activities such as TBP interaction and promoter selectivity, interaction with transcription activators, and chromatin modification through histone acetylation and deubiquitination. SAGA acetylates nucleosomal histone H3 to some extent (to form H3K9ac, H3K14ac, H3K18ac and H3K23ac). SAGA interacts with DNA via upstream activating sequences (UASs). Involved in transcriptional regulation of a subset of SAGA-regulated genes. Within the SAGA complex, participates in a subcomplex, that specifically deubiquitinates histones H2B. The chain is SAGA-associated factor 11 from Eremothecium gossypii (strain ATCC 10895 / CBS 109.51 / FGSC 9923 / NRRL Y-1056) (Yeast).